We begin with the raw amino-acid sequence, 160 residues long: V-type proton ATPase subunit c (160 aa).

Residues 1 to 6 (MSDLCP) are Lumenal-facing. Residues 7-27 (VYAPFFGSIGCAAAIVFTCFG) traverse the membrane as a helical segment. The Cytoplasmic portion of the chain corresponds to 28–53 (ASYGTAKSGVGICATSVTRPDLLVKN). Residues 54–74 (VVPVVMAGIIAIYGLVVSVLV) traverse the membrane as a helical segment. Residues 75–90 (SDSLSQKQALYTGFIQ) are Lumenal-facing. The helical transmembrane segment at 91–111 (LGAGLSVGLSGLAAGFAIGIV) threads the bilayer. Topologically, residues 112-129 (GDAGVRGTAQQPRLFVGM) are cytoplasmic. A helical transmembrane segment spans residues 130-150 (ILILIFAEVLGLYGLIVALLL). Topologically, residues 151-160 (NSRASQDVTC) are lumenal.

The protein belongs to the V-ATPase proteolipid subunit family. V-ATPase is a heteromultimeric enzyme composed of a peripheral catalytic V1 complex (components A to H) attached to an integral membrane V0 proton pore complex (components: a, c, c', c'', d, e, f and VOA1). The decameric c-ring forms the proton-conducting pore, and is composed of eight proteolipid subunits c, one subunit c' and one subunit c''.

It is found in the vacuole membrane. Functionally, proton-conducting pore forming subunit of the V0 complex of vacuolar(H+)-ATPase (V-ATPase), a multisubunit enzyme composed of a peripheral complex (V1) that hydrolyzes ATP and a membrane integral complex (V0) that translocates protons. V-ATPase is responsible for acidifying and maintaining the pH of intracellular compartments. The chain is V-type proton ATPase subunit c (VMA3) from Candida tropicalis (Yeast).